The chain runs to 164 residues: Probable calcium-binding protein CML17 (164 aa).

4 EF-hand domains span residues 4–39 (DQQAELRRVFELFDRDGDGRITREELTESLERLGMP), 40–75 (VHREELAATIARIDANGDGCVDMDEFTQLYETVMRV), 88–123 (VDEASMREAFDVFDRNGDGFITVDELGAVLASLGIK), and 126–161 (RTAEDCGRMIGQVDRDGDGRVDFLEFKQMMRGGAFA). Residues D17, D19, D21, R23, E28, D53, N55, D57, C59, E64, D101, N103, D105, E112, D139, D141, D143, R145, and E150 each coordinate Ca(2+).

Functionally, potential calcium sensor. In Oryza sativa subsp. japonica (Rice), this protein is Probable calcium-binding protein CML17 (CML17).